A 366-amino-acid polypeptide reads, in one-letter code: Neutral protease 2 homolog MGYG_04094 (366 aa).

The signal sequence occupies residues 1-19 (MQILAALSAIGALVATATA). Residues 20–188 (AAVPNAPAKQ…NKSRSTIDKR (169 aa)) constitute a propeptide that is removed on maturation. 2 cysteine pairs are disulfide-bonded: Cys196-Cys267 and Cys274-Cys292. Residue His317 participates in Zn(2+) binding. Glu318 is a catalytic residue. Zn(2+)-binding residues include His321 and Asp332.

The protein belongs to the peptidase M35 family. Zn(2+) serves as cofactor.

It is found in the secreted. It carries out the reaction Preferential cleavage of bonds with hydrophobic residues in P1'. Also 3-Asn-|-Gln-4 and 8-Gly-|-Ser-9 bonds in insulin B chain.. Its function is as follows. Secreted metalloproteinase that allows assimilation of proteinaceous substrates. Shows high activities on basic nuclear substrates such as histone and protamine. May be involved in virulence. This Arthroderma gypseum (strain ATCC MYA-4604 / CBS 118893) (Microsporum gypseum) protein is Neutral protease 2 homolog MGYG_04094.